A 198-amino-acid polypeptide reads, in one-letter code: Fimbriae W protein (198 aa).

Residues 127 to 192 (HYCTTRHFSV…QFLKYIRVNL (66 aa)) form the HTH luxR-type domain.

It is found in the fimbrium. In Salmonella typhimurium (strain LT2 / SGSC1412 / ATCC 700720), this protein is Fimbriae W protein (fimW).